Consider the following 507-residue polypeptide: MTTIVEEEPLFYIVMLSIGSFFALGSIIIAVILILQHFIHYNKPNHQKYIVRIIMIAPIYAIHSLLSLFFKRQFWALFFDISRDCYEAYVLYCFFKLLICFLGGEEALKELLSKKDTQPLTWPLGYFFSFTPKKSFYRLSLGLVLQYAIIKPTLAIVAAILYYNNKYLEGDFSISQGYLWITVINNISVLIALYFLVMFYEVFQNELSPHSPILKFLVIKSVVFFLFWQTVVITVLIWFDALPKSDVYSSEHIGYFINDFLVCIEMFITSIAMGICFSYSDYVIDKSTHDEILGNGKRSSSRGIGSRSGRNIKISSKIKNIKNNFNRYRHNIGDGLSDVNNPKDIILDTIMVAKLNKNNNNTNNNEINNGIIDNNNSNNIENNGKSRNNIENNIDSQDYFNFIDLNTNDKEKQSKSKYFKIKMPDSDQSSLINLDQCESPSILYGSLNGASNNNNNNNNNNNNINNNNNNNSNNSNNNSNSQFESIDINSNSVNSNKNQSDAILFTF.

7 consecutive transmembrane segments (helical) span residues 13–33 (IVML…AVIL), 50–70 (IVRI…SLFF), 88–108 (AYVL…EEAL), 141–161 (LGLV…AAIL), 179–199 (LWIT…LVMF), 222–242 (VVFF…FDAL), and 260–280 (FLVC…FSYS). Residues Asn360, Asn375, Asn470, Asn473, Asn477, and Asn498 are each glycosylated (N-linked (GlcNAc...) asparagine). Residues 448–500 (NGASNNNNNNNNNNNNINNNNNNNSNNSNNNSNSQFESIDINSNSVNSNKNQS) form a disordered region. Residues 451–500 (SNNNNNNNNNNNNINNNNNNNSNNSNNNSNSQFESIDINSNSVNSNKNQS) are compositionally biased toward low complexity.

This sequence belongs to the TMEM184 family.

It is found in the cell membrane. In terms of biological role, probable transporter. The protein is Transmembrane protein 184 homolog DDB_G0276041 (tmem184B) of Dictyostelium discoideum (Social amoeba).